The chain runs to 599 residues: Phosphomethylpyrimidine synthase (599 aa).

Positions 1-16 are enriched in polar residues; it reads MSAASANSVTNPSAWE. Disordered stretches follow at residues 1–53 and 82–108; these read MSAA…PNDP and EDTEEYAGRERNLADDGRSAQRRGAAS. Residues 87–100 are compositionally biased toward basic and acidic residues; the sequence is YAGRERNLADDGRS. Residues Asn192, Met221, Tyr250, His286, 306–308, 347–350, and Glu386 contribute to the substrate site; these read SRG and DGLR. His390 serves as a coordination point for Zn(2+). Tyr413 contacts substrate. His454 is a binding site for Zn(2+). [4Fe-4S] cluster contacts are provided by Cys534, Cys537, and Cys542.

This sequence belongs to the ThiC family. [4Fe-4S] cluster serves as cofactor.

It catalyses the reaction 5-amino-1-(5-phospho-beta-D-ribosyl)imidazole + S-adenosyl-L-methionine = 4-amino-2-methyl-5-(phosphooxymethyl)pyrimidine + CO + 5'-deoxyadenosine + formate + L-methionine + 3 H(+). Its pathway is cofactor biosynthesis; thiamine diphosphate biosynthesis. Functionally, catalyzes the synthesis of the hydroxymethylpyrimidine phosphate (HMP-P) moiety of thiamine from aminoimidazole ribotide (AIR) in a radical S-adenosyl-L-methionine (SAM)-dependent reaction. This Corynebacterium diphtheriae (strain ATCC 700971 / NCTC 13129 / Biotype gravis) protein is Phosphomethylpyrimidine synthase.